The sequence spans 2531 residues: MLSMLQEKRPLKRTRLGPPDIYPQDAKQREDELTPTNVKHGFTTTPPLSDEFGTAHNSNVNASKVSAFFSGVLAKKEELMTLPDTGRKKQQINCKDNFWPVSPRRKCTVDAWFKDLAGNKPLLSLAKRAPSFNKKEEIFITLCENQVNMQRATWFIKLSAAYTLSFTESKNKKRSIYDPAAEWTGNMIKFMKELLPKLQEYYQQNHDKSSSNGTTSGSLTAAGNGPASNGSTGTSSINSVTGSSASTNVIPVPSMASPLPPIHSPANGQQAAPGGGVNAGSVMPTTGSLGGVVGGPGSSVVGGAAGAGAAVPPGSTISGIGSQFEDSRNALKYWKYCHQLSKYMYEESLLDRQEFLNWILDLLDKMRTQASFDEPLKKLVLSFALQYMHDFVQSERLCRKMAYIVSKKLAQLLNTVVEQQTIKELDEPKLQQDPYELALQEQMSCPHHRDIVLYLSTILQIITIECPTALVWSGIAAHRAPSSLLGSPLDHLPLAPSVLPMPTRCPRTNHEIRRQLRAAESDIVLRTQHAEQRWFAAKWLSAGKNQYTSVLATLDHLDTHCFDRMEHNNSIDTLYAQIFPSPTVSRRREEDQVEPRPPYEPKQDKDTVRILCEWAVSGQRWGEHRAMVVAILLDKRQIDVTSTPADQQSSDKDDKDSLASGAGLIDGLPVFQHVLMHFLDHDAPVLDEHVSSPQQRTEFTNLVQLFSALIRHDVFSHNAYMHTLISRGDLLLESVLVIKSGTTATKTSPPPPAPPPTTTHGFDDDGFGGGLDFKHNEFDDSNVDDDLDKLVQNIKEKGQQHEAPDSPKIGPPGDGETNPGGSISRHYVYTKHFPIPQDDPSMSSYSSESNQRYILLFGVGKERDEKKHAVKKMSKEIGKLFTKKFSIDVAAAGHVKKHSRNEFNFEATTSKCQQMAYFDQHVVTAQCAANVLEQLNGFALGNNNYLPVQEHVAFLFDLMELALNIYSLLELCDSLLKELPEVEHQLQLKKSNLVRSYTTSLALYIVSILRRYHSCLLLSPEQTLSVFEGVCRTIRHVSNPSECTSAERCIIAYLSDLHESCVLLQGKEQSTEYYQQLQCIKRFKDIFNTPEQLDLPPQGYNPLLLQELFMAPRRGGKLDPHWLGTLHESPANVYSFVSNALIAVCRETDNERLNDVALACAELTASCNVLSEEWIYALQSLCSGSKSPRYPHLGGQVDIGQLKTHNALAVFVCILVARHCFSLADFVSKFALPTLARSVSAGGAELSVDAEAGARLTCHLVLKLFKTLEIPQPGMYSVSTSPNPLHAVGNDFSIRLSCDRHLLVGAHKTIPIAAVLAVLKAILIVVDNAALKTPLASGSGTSSGGLGGAFGSGKRSGFNTPVHPGSTPKSNEQRPADLSQILGTSDLQLGSSLTSEPEALQQPSVGGMEQISLLEFAQAVLKQICAQEHVLERCLKNAEQLCDMIIDEMLTAKQAQRVLHMICYPEPEFNIISELDQRSMIVRILENLGQWTLRISWLDLQLMYRQSLSNNAELNVWLDTVARAAIDVFHMEEVVLPGAVKATHKPKPSTWLVAPLIAKLTPAVQGRILRVAGQVLESMNYFSKVSKSDCNSSGSGDEREKSNSCHSSNSYGLGGVPARNKKMPLDYQPFLGLILTCLKGQDEYKENLLVSLYAQLSQCLQSFAELDTIGGIDEPQAREEILDALQLRFSLVGGMFEAIQKNSTPTTDWAILLAQLVCQGVVDLSCNRELFTTVVDMLATLVHSTLVSDDERHYMNLMKKLKKEIGEKNNASIRVIRQLLPLYKQPTEVIACEHSGMDTKGNKICDIDKKQLRISDKQRISVWDILEGHKNPAPLSWVWFGAVKLERKPLTYEEAHRNLKYHTHSLVKPSSYYYEPLPLPPEDIEPVPEKICIKDEMKADTPSSVDQSPSAVVGGTGRGRGKGTTTRKRKPKNPKTPPVVNTQQQQPQLAQQPQQPQNVQQQQLQQQQQQQQHMQQQHMQQQQMQPNQMGQMPMNMPMNMQQFAPNPNNMMQQNAMLQQQQQQQMQQMGNNPMQQQLNVGGGNGQPNPQMNFMQQGPGGGGAGPQGMPGQQQQWHNAPQQQQPPQPYHNQYAPHQQNMQSNRIERPPLNANSKQALSQMLRQRQPFQQQAQQGPGGGFNPMQQQPQASQQQPGPQQQMNPNQMRQQQMNPQQNPQSVAAFNAMQQQPQQNAQQQQMNPNQQQQQQFMRGGNMRPGMAPNQMNQMNMGGQGMSQNPMMQQQIPQNMVGMVNPNANQMMQSGGAQGGNGVGVGVGVGVGGAGNNPNMGMGGMPQQGMIQQQPQQQPQQQVQFQNFQNQYQQQQQQGMQQQGGGAGVGVGVGMAPNQQQQQQANMMGNFNPQMQQGNRNNPDFMAAAAVAQQQQQQQQQQRVVPGGMMAGNRNQYMNQAPNVTMSTMMGPGPGGVVGQVPPYARQQSAGGGKPGVLNTQQQFQQQQQQQQQLRHQMMQLQGMGGGAGGGMGAGPQQGGGAVGGGAGGGMVPQQQSMNQQQTPNLVAQLQRQNMMGQQQYQPPPY.

4 disordered regions span residues 1–41, 204–283, 584–604, and 742–762; these read MLSM…VKHG, QNHD…GSVM, VSRRREEDQVEPRPPYEPKQD, and TTATKTSPPPPAPPPTTTHGF. The span at 210 to 247 shows a compositional bias: low complexity; that stretch reads SSNGTTSGSLTAAGNGPASNGSTGTSSINSVTGSSAST. Basic and acidic residues predominate over residues 586–604; the sequence is RRREEDQVEPRPPYEPKQD. Phosphothreonine is present on threonine 745. Serine 748 and serine 781 each carry phosphoserine. The segment covering 748–757 has biased composition (pro residues); that stretch reads SPPPPAPPPT. Basic and acidic residues predominate over residues 796 to 805; it reads EKGQQHEAPD. The tract at residues 796–824 is disordered; it reads EKGQQHEAPDSPKIGPPGDGETNPGGSIS. Residues serine 806 and serine 1356 each carry the phosphoserine modification. A Phosphothreonine modification is found at threonine 1360. Composition is skewed to polar residues over residues 1585 to 1595 and 1901 to 1910; these read VSKSDCNSSGS and TPSSVDQSPS. Disordered regions lie at residues 1585-1608, 1898-2092, 2114-2218, and 2469-2508; these read VSKSDCNSSGSGDEREKSNSCHSS, KADT…NQYA, QALS…GMAP, and MGGGAGGGMGAGPQQGGGAVGGGAGGGMVPQQQSMNQQQT. Basic residues predominate over residues 1919–1933; sequence GRGKGTTTRKRKPKN. Composition is skewed to low complexity over residues 1938-2038 and 2045-2055; these read PVVN…QQLN and QPNPQMNFMQQ. Residues 2056 to 2066 show a composition bias toward gly residues; it reads GPGGGGAGPQG. Low complexity-rich tracts occupy residues 2067–2080, 2121–2132, and 2139–2205; these read MPGQQQQWHNAPQQ, RQRQPFQQQAQQ, and NPMQ…QQQQ. The span at 2469–2496 shows a compositional bias: gly residues; it reads MGGGAGGGMGAGPQQGGGAVGGGAGGGM. Residues 2497–2507 show a composition bias toward low complexity; the sequence is VPQQQSMNQQQ.

It belongs to the Mediator complex subunit 12 family. In terms of assembly, component of the Cdk8 module of the Mediator complex, composed of CycC, Cdk8, kto and skd.

It localises to the nucleus. Component of the Mediator complex, a coactivator involved in regulated gene transcription of nearly all RNA polymerase II-dependent genes. Mediator functions as a bridge to convey information from gene-specific regulatory proteins to the basal RNA polymerase II transcription machinery. Mediator is recruited to promoters by direct interactions with regulatory proteins and serves as a scaffold for the assembly of a functional preinitiation complex with RNA polymerase II and the general transcription factors. Required for leg and eye development and macrochaete specification or differentiation. This chain is Mediator of RNA polymerase II transcription subunit 12 (kto), found in Drosophila melanogaster (Fruit fly).